The primary structure comprises 346 residues: L-threonine dehydratase catabolic TdcB (346 aa).

59–60 (FT) provides a ligand contact to AMP. Lys-64 is modified (N6-(pyridoxal phosphate)lysine). Residues Gln-94, 125–126 (GY), and Asn-321 each bind AMP.

This sequence belongs to the serine/threonine dehydratase family. In the native structure, TdcB is in a dimeric form, whereas in the TdcB-AMP complex, it exists in a tetrameric form (dimer of dimers). Pyridoxal 5'-phosphate is required as a cofactor.

The catalysed reaction is L-threonine = 2-oxobutanoate + NH4(+). The protein operates within amino-acid degradation; L-threonine degradation via propanoate pathway; propanoate from L-threonine: step 1/4. Each protein molecule can bind up to four molecules of AMP, which act as an allosteric activator to the enzyme. In terms of biological role, catalyzes the anaerobic formation of alpha-ketobutyrate and ammonia from threonine in a two-step reaction. The first step involved a dehydration of threonine and a production of enamine intermediates (aminocrotonate), which tautomerizes to its imine form (iminobutyrate). Both intermediates are unstable and short-lived. The second step is the nonenzymatic hydrolysis of the enamine/imine intermediates to form 2-ketobutyrate and free ammonia. In the low water environment of the cell, the second step is accelerated by RidA. The sequence is that of L-threonine dehydratase catabolic TdcB (tdcB) from Staphylococcus aureus (strain USA300).